The sequence spans 135 residues: Large ribosomal subunit protein eL32 (135 aa).

Lys-9 participates in a covalent cross-link: Glycyl lysine isopeptide (Lys-Gly) (interchain with G-Cter in SUMO2). Lys-50 is subject to N6-succinyllysine. Ser-62 bears the Phosphoserine mark.

The protein belongs to the eukaryotic ribosomal protein eL32 family. As to quaternary structure, component of the large ribosomal subunit.

The protein resides in the cytoplasm. Component of the large ribosomal subunit. The ribosome is a large ribonucleoprotein complex responsible for the synthesis of proteins in the cell. In Oryctolagus cuniculus (Rabbit), this protein is Large ribosomal subunit protein eL32 (RPL32).